Consider the following 273-residue polypeptide: Large ribosomal subunit protein uL2 (273 aa).

Disordered regions lie at residues 28–55 (TPEKSLTRGKPAKAGRGAGGRISVRHRG) and 222–273 (GMAM…SKRK). Residues 255 to 273 (YKTRKKRRVSDRFIVSKRK) show a composition bias toward basic residues.

Belongs to the universal ribosomal protein uL2 family. Part of the 50S ribosomal subunit. Forms a bridge to the 30S subunit in the 70S ribosome.

One of the primary rRNA binding proteins. Required for association of the 30S and 50S subunits to form the 70S ribosome, for tRNA binding and peptide bond formation. It has been suggested to have peptidyltransferase activity; this is somewhat controversial. Makes several contacts with the 16S rRNA in the 70S ribosome. In Treponema pallidum (strain Nichols), this protein is Large ribosomal subunit protein uL2.